We begin with the raw amino-acid sequence, 1040 residues long: Multidrug resistance protein MdtB (1040 aa).

Transmembrane regions (helical) follow at residues 25 to 45 (LLMA…PVAA), 347 to 367 (LMLA…NIPA), 369 to 389 (IIPG…MVFL), 396 to 416 (LTLM…IVVI), 440 to 460 (IGFT…PLLF), 472 to 492 (FAVT…TLTP), 537 to 557 (WLTL…WIVI), 863 to 883 (LGST…VLGV), 888 to 908 (FIHP…ALLA), 910 to 930 (IIAG…LIGI), 968 to 988 (ILMT…STGV), and 998 to 1018 (IAMV…TPVI).

The protein belongs to the resistance-nodulation-cell division (RND) (TC 2.A.6) family. MdtB subfamily. In terms of assembly, part of a tripartite efflux system composed of MdtA, MdtB and MdtC. MdtB forms a heteromultimer with MdtC.

The protein resides in the cell inner membrane. This chain is Multidrug resistance protein MdtB, found in Salmonella paratyphi B (strain ATCC BAA-1250 / SPB7).